The sequence spans 247 residues: Probable transcriptional regulatory protein Glov_1245 (247 aa).

It belongs to the TACO1 family.

It is found in the cytoplasm. The protein is Probable transcriptional regulatory protein Glov_1245 of Trichlorobacter lovleyi (strain ATCC BAA-1151 / DSM 17278 / SZ) (Geobacter lovleyi).